The sequence spans 266 residues: Agamous-like MADS-box protein AGL97 (266 aa).

Residues 3–63 (GVKRKIAIEK…SNSNAAFYSF (61 aa)) enclose the MADS-box domain. A coiled-coil region spans residues 88-130 (WEDESLLKSENLEELREAMDSMSTMLRDLKELEKQRDHQTQTL).

As to quaternary structure, interacts with AGL27 and AGL62.

It is found in the nucleus. In terms of biological role, putative transcription factor. This is Agamous-like MADS-box protein AGL97 (AGL97) from Arabidopsis thaliana (Mouse-ear cress).